A 602-amino-acid chain; its full sequence is MATRIKILPENLTNKIAAGEVVERPASVVKELVENALDAGCSEVVVEIEAGGRRLIKVTDSGCGMTREDALLALERHATSKIASDSDLFGLATLGFRGEALPSIASVSRFALATREKGAIEGTEIYAEGGRVKEVKVCGMAEGTVISVRNLFFNTPARLKFMKSSDTEAGHVGDLLTKLAISRPDVRFIYNNDGRTIFRALDADLRERVATLLGRALSADLYPLDFHDGPLGVTGLIAKPECSRSAASHLYTYINGRFIKDKVVQHAVLQAYRNFMERGRYPVVVLFITVPADEVDVNVHPTKHEVRFREQGRVHDAIQAALESVLRATPWVRKQAAPQPFASPPPASEASATRVAEVRETLARYSPEKHLQQSFTVPPAATFQRQQGAVSLPVAAREDDTASDKTESKGYYCSLSVIGQFNAAYILCQDGTDLVIIDQHAAHERVAFEKLKAQFAAAQVESQRLLFPETIELSFKEGATLREHLAELGRLGFSLEEFGGATWLLNAVPRLLSGTDYLRTLRDILEELQTLGRSRTFADALEEILSRIACHSVVRGIHPLNGQEISALFAQMDATEFSSNCPHGRPVLRSLTLPEIERMFKR.

This sequence belongs to the DNA mismatch repair MutL/HexB family.

Its function is as follows. This protein is involved in the repair of mismatches in DNA. It is required for dam-dependent methyl-directed DNA mismatch repair. May act as a 'molecular matchmaker', a protein that promotes the formation of a stable complex between two or more DNA-binding proteins in an ATP-dependent manner without itself being part of a final effector complex. The chain is DNA mismatch repair protein MutL from Geotalea uraniireducens (strain Rf4) (Geobacter uraniireducens).